The primary structure comprises 288 residues: Probable ketoamine kinase VP1481 (288 aa).

92–94 (NYL) lines the ATP pocket. Catalysis depends on aspartate 195, which acts as the Proton acceptor.

Belongs to the fructosamine kinase family.

In terms of biological role, ketoamine kinase that phosphorylates ketoamines on the third carbon of the sugar moiety to generate ketoamine 3-phosphate. The protein is Probable ketoamine kinase VP1481 of Vibrio parahaemolyticus serotype O3:K6 (strain RIMD 2210633).